Here is a 548-residue protein sequence, read N- to C-terminus: Flagellin (548 aa).

This sequence belongs to the bacterial flagellin family.

It is found in the secreted. It localises to the bacterial flagellum. In terms of biological role, flagellin is the subunit protein which polymerizes to form the filaments of bacterial flagella. The protein is Flagellin (fliC) of Escherichia coli O127:H6 (strain E2348/69 / EPEC).